The following is a 613-amino-acid chain: Penicillin-binding protein activator LpoA (613 aa).

The first 29 residues, Met-1–Gly-29, serve as a signal peptide directing secretion. Cys-30 carries the N-palmitoyl cysteine lipid modification. The S-diacylglycerol cysteine moiety is linked to residue Cys-30.

The protein belongs to the LpoA family. Interacts with PBP1a.

Its subcellular location is the cell outer membrane. Functionally, regulator of peptidoglycan synthesis that is essential for the function of penicillin-binding protein 1A (PBP1a). The chain is Penicillin-binding protein activator LpoA from Photobacterium profundum (strain SS9).